We begin with the raw amino-acid sequence, 126 residues long: Fluoride-specific ion channel FluC (126 aa).

Transmembrane regions (helical) follow at residues 2-22 (LITV…RYLI), 37-57 (VGVL…VVLA), 65-85 (LSPF…AFSL), and 99-119 (AALY…LGMM). Positions 75 and 78 each coordinate Na(+).

The protein belongs to the fluoride channel Fluc/FEX (TC 1.A.43) family.

The protein resides in the cell inner membrane. It catalyses the reaction fluoride(in) = fluoride(out). Na(+) is not transported, but it plays an essential structural role and its presence is essential for fluoride channel function. Its function is as follows. Fluoride-specific ion channel. Important for reducing fluoride concentration in the cell, thus reducing its toxicity. In Ruegeria sp. (strain TM1040) (Silicibacter sp.), this protein is Fluoride-specific ion channel FluC.